Here is a 445-residue protein sequence, read N- to C-terminus: Ribosomal protein uS12 methylthiotransferase RimO (445 aa).

In terms of domain architecture, MTTase N-terminal spans 11 to 121 (PKISFVSLGC…VLDAVHRASP (111 aa)). [4Fe-4S] cluster contacts are provided by C20, C56, C85, C152, C156, and C159. In terms of domain architecture, Radical SAM core spans 138 to 375 (LTPRHYAYLK…MARQQKISAR (238 aa)). Residues 378-444 (KRKVGTRQQI…EYDLHGTVAG (67 aa)) enclose the TRAM domain.

This sequence belongs to the methylthiotransferase family. RimO subfamily. Requires [4Fe-4S] cluster as cofactor.

It is found in the cytoplasm. It carries out the reaction L-aspartate(89)-[ribosomal protein uS12]-hydrogen + (sulfur carrier)-SH + AH2 + 2 S-adenosyl-L-methionine = 3-methylsulfanyl-L-aspartate(89)-[ribosomal protein uS12]-hydrogen + (sulfur carrier)-H + 5'-deoxyadenosine + L-methionine + A + S-adenosyl-L-homocysteine + 2 H(+). Its function is as follows. Catalyzes the methylthiolation of an aspartic acid residue of ribosomal protein uS12. The protein is Ribosomal protein uS12 methylthiotransferase RimO of Bradyrhizobium sp. (strain ORS 278).